The primary structure comprises 79 residues: UPF0180 protein BCAH820_1484 (79 aa).

This sequence belongs to the UPF0180 family.

This chain is UPF0180 protein BCAH820_1484, found in Bacillus cereus (strain AH820).